A 94-amino-acid polypeptide reads, in one-letter code: MKIPKKVRRYCPYCKKHTIHIVEKAKKGKPSELTWGQRQFRRVTAGYGGFPRPLPDRSKPVKKIDLRFKCTECGKMHTKANGCFRSGRFEFVEK.

Cys-11, Cys-14, Cys-70, and Cys-73 together coordinate Zn(2+). Residues 11 to 73 form a C4-type zinc finger; it reads CPYCKKHTIH…IDLRFKCTEC (63 aa).

The protein belongs to the eukaryotic ribosomal protein eL42 family. As to quaternary structure, part of the 50S ribosomal subunit. Requires Zn(2+) as cofactor.

Its function is as follows. Binds to the 23S rRNA. The sequence is that of Large ribosomal subunit protein eL42 from Methanocaldococcus jannaschii (strain ATCC 43067 / DSM 2661 / JAL-1 / JCM 10045 / NBRC 100440) (Methanococcus jannaschii).